Reading from the N-terminus, the 602-residue chain is Proteasome-associated ATPase (602 aa).

The segment covering 1-17 (MSGPRSGSGSDGSTGRP) has biased composition (low complexity). The interval 1-31 (MSGPRSGSGSDGSTGRPGDAESRRSAYEKET) is disordered. The segment covering 18–31 (GDAESRRSAYEKET) has biased composition (basic and acidic residues). Residues 19-106 (DAESRRSAYE…LKEEVDRLAQ (88 aa)) adopt a coiled-coil conformation. ATP is bound at residue 289-294 (GCGKTL). The tract at residues 601 to 602 (YL) is docks into pockets in the proteasome alpha-ring.

It belongs to the AAA ATPase family. As to quaternary structure, homohexamer. Assembles into a hexameric ring structure that caps the 20S proteasome core. Strongly interacts with the prokaryotic ubiquitin-like protein Pup through a hydrophobic interface; the interacting region of ARC lies in its N-terminal coiled-coil domain. There is one Pup binding site per ARC hexamer ring. Upon ATP-binding, the C-terminus of ARC interacts with the alpha-rings of the proteasome core, possibly by binding to the intersubunit pockets.

It participates in protein degradation; proteasomal Pup-dependent pathway. ATPase which is responsible for recognizing, binding, unfolding and translocation of pupylated proteins into the bacterial 20S proteasome core particle. May be essential for opening the gate of the 20S proteasome via an interaction with its C-terminus, thereby allowing substrate entry and access to the site of proteolysis. Thus, the C-termini of the proteasomal ATPase may function like a 'key in a lock' to induce gate opening and therefore regulate proteolysis. The polypeptide is Proteasome-associated ATPase (Frankia casuarinae (strain DSM 45818 / CECT 9043 / HFP020203 / CcI3)).